Consider the following 136-residue polypeptide: Large ribosomal subunit protein uL16 (136 aa).

This sequence belongs to the universal ribosomal protein uL16 family. In terms of assembly, part of the 50S ribosomal subunit.

Its function is as follows. Binds 23S rRNA and is also seen to make contacts with the A and possibly P site tRNAs. The protein is Large ribosomal subunit protein uL16 of Karelsulcia muelleri (strain GWSS) (Sulcia muelleri).